A 925-amino-acid polypeptide reads, in one-letter code: Probable glycoprotein hormone G-protein coupled receptor (925 aa).

The signal sequence occupies residues M1 to A27. Residues A28 to T529 lie on the Extracellular side of the membrane. N61 carries N-linked (GlcNAc...) asparagine glycosylation. 8 LRR repeats span residues K85–N106, S110–D131, Q134–S155, S156–P180, S181–Q202, N203–A224, S230–K250, and N251–R273. The N-linked (GlcNAc...) asparagine glycan is linked to N152. The N-linked (GlcNAc...) asparagine glycan is linked to N212. A disordered region spans residues T299–T493. The span at Q301–T318 shows a compositional bias: polar residues. The stretch at S333 to G349 is one 1; truncated repeat. The tract at residues S333 to G461 is 5 X approximate tandem repeats. Gly residues predominate over residues G341–A362. 3 consecutive repeat copies span residues G350 to G384, G385 to G419, and G420 to G453. The span at S365–S375 shows a compositional bias: polar residues. The span at G376 to A397 shows a compositional bias: gly residues. Residues S400–S410 show a composition bias toward polar residues. Gly residues predominate over residues G411 to G432. A compositionally biased stretch (polar residues) spans S434–N445. The N-linked (GlcNAc...) asparagine glycan is linked to N435. A compositionally biased stretch (gly residues) spans S446–T462. The 5; truncated repeat unit spans residues G454–G461. The segment covering V476–T493 has biased composition (polar residues). N495 carries N-linked (GlcNAc...) asparagine glycosylation. The helical transmembrane segment at V530–L551 threads the bilayer. At T552 to R561 the chain is on the cytoplasmic side. A helical transmembrane segment spans residues F562–V584. Residues S585–K606 lie on the Extracellular side of the membrane. A helical membrane pass occupies residues I607–I628. Residues E629–R651 are Cytoplasmic-facing. Residues F652–G673 traverse the membrane as a helical segment. At Y674 to T691 the chain is on the extracellular side. The chain crosses the membrane as a helical span at residues A692–Y712. Residues S713–R739 lie on the Cytoplasmic side of the membrane. The helical transmembrane segment at M740–F763 threads the bilayer. The Extracellular portion of the chain corresponds to G764–K774. Residues I775–F795 traverse the membrane as a helical segment. Residues T796–S925 lie on the Cytoplasmic side of the membrane. A disordered region spans residues V904–S925.

Belongs to the G-protein coupled receptor 1 family. FSH/LSH/TSH subfamily.

The protein localises to the cell membrane. Functionally, probable receptor for a glycoprotein hormone. This chain is Probable glycoprotein hormone G-protein coupled receptor, found in Anthopleura elegantissima (Green aggregating anemone).